The chain runs to 207 residues: ATP synthase subunit b 2 (207 aa).

The chain crosses the membrane as a helical span at residues 58 to 78 (LLWLVITFGVFYLLMQKVIAP).

This sequence belongs to the ATPase B chain family. F-type ATPases have 2 components, F(1) - the catalytic core - and F(0) - the membrane proton channel. F(1) has five subunits: alpha(3), beta(3), gamma(1), delta(1), epsilon(1). F(0) has three main subunits: a(1), b(2) and c(10-14). The alpha and beta chains form an alternating ring which encloses part of the gamma chain. F(1) is attached to F(0) by a central stalk formed by the gamma and epsilon chains, while a peripheral stalk is formed by the delta and b chains.

The protein localises to the cell inner membrane. Its function is as follows. F(1)F(0) ATP synthase produces ATP from ADP in the presence of a proton or sodium gradient. F-type ATPases consist of two structural domains, F(1) containing the extramembraneous catalytic core and F(0) containing the membrane proton channel, linked together by a central stalk and a peripheral stalk. During catalysis, ATP synthesis in the catalytic domain of F(1) is coupled via a rotary mechanism of the central stalk subunits to proton translocation. In terms of biological role, component of the F(0) channel, it forms part of the peripheral stalk, linking F(1) to F(0). The b'-subunit is a diverged and duplicated form of b found in plants and photosynthetic bacteria. The protein is ATP synthase subunit b 2 (atpF2) of Rhizobium johnstonii (strain DSM 114642 / LMG 32736 / 3841) (Rhizobium leguminosarum bv. viciae).